We begin with the raw amino-acid sequence, 199 residues long: Recombination protein RecR (199 aa).

The C4-type zinc finger occupies 57–72 (CEICGNMDTKNICHIC). The Toprim domain maps to 80–175 (STIAIVETVA…KISRLASGIP (96 aa)).

Belongs to the RecR family.

Functionally, may play a role in DNA repair. It seems to be involved in an RecBC-independent recombinational process of DNA repair. It may act with RecF and RecO. The chain is Recombination protein RecR from Rickettsia typhi (strain ATCC VR-144 / Wilmington).